The chain runs to 575 residues: Adenine deaminase (575 aa).

The protein belongs to the metallo-dependent hydrolases superfamily. Adenine deaminase family. The cofactor is Mn(2+).

The catalysed reaction is adenine + H2O + H(+) = hypoxanthine + NH4(+). The polypeptide is Adenine deaminase (Nitratidesulfovibrio vulgaris (strain ATCC 29579 / DSM 644 / CCUG 34227 / NCIMB 8303 / VKM B-1760 / Hildenborough) (Desulfovibrio vulgaris)).